Here is a 147-residue protein sequence, read N- to C-terminus: D-aminoacyl-tRNA deacylase (147 aa).

A Gly-cisPro motif, important for rejection of L-amino acids motif is present at residues Gly-136 to Pro-137.

The protein belongs to the DTD family. Homodimer.

The protein localises to the cytoplasm. It catalyses the reaction glycyl-tRNA(Ala) + H2O = tRNA(Ala) + glycine + H(+). The catalysed reaction is a D-aminoacyl-tRNA + H2O = a tRNA + a D-alpha-amino acid + H(+). In terms of biological role, an aminoacyl-tRNA editing enzyme that deacylates mischarged D-aminoacyl-tRNAs. Also deacylates mischarged glycyl-tRNA(Ala), protecting cells against glycine mischarging by AlaRS. Acts via tRNA-based rather than protein-based catalysis; rejects L-amino acids rather than detecting D-amino acids in the active site. By recycling D-aminoacyl-tRNA to D-amino acids and free tRNA molecules, this enzyme counteracts the toxicity associated with the formation of D-aminoacyl-tRNA entities in vivo and helps enforce protein L-homochirality. The protein is D-aminoacyl-tRNA deacylase of Streptococcus agalactiae serotype III (strain NEM316).